The chain runs to 610 residues: Replication protein E1 (610 aa).

The short motif at 83–85 (KRK) is the Nuclear localization signal element. Ser-93 and Ser-102 each carry phosphoserine; by host. The Nuclear export signal motif lies at 101–110 (LSPRLEAVTI). The interval 148-312 (ESGTLVVETD…MLDHESAASS (165 aa)) is DNA-binding region. An SF3 helicase domain is found at 411 to 561 (VNFISFLCAL…LPLKENDEVL (151 aa)). ATP is bound at residue 437-444 (GPPDTGKS). Lys-518 is covalently cross-linked (Glycyl lysine isopeptide (Lys-Gly) (interchain with G-Cter in SUMO)). The disordered stretch occupies residues 591–610 (ESGRSDRAFRCTAGTNTESI).

Belongs to the papillomaviridae E1 protein family. Can form hexamers. Interacts with E2 protein; this interaction increases E1 DNA binding specificity. Interacts with host DNA polymerase subunit POLA2. Interacts with host single stranded DNA-binding protein RPA1. Interacts with host TOP1; this interaction stimulates the enzymatic activity of TOP1. In terms of processing, phosphorylated. Post-translationally, sumoylated.

It is found in the host nucleus. The catalysed reaction is Couples ATP hydrolysis with the unwinding of duplex DNA by translocating in the 3'-5' direction.. The enzyme catalyses ATP + H2O = ADP + phosphate + H(+). ATP-dependent DNA 3'-5' helicase required for initiation of viral DNA replication. It forms a complex with the viral E2 protein. The E1-E2 complex binds to the replication origin which contains binding sites for both proteins. During the initial step, a dimer of E1 interacts with a dimer of protein E2 leading to a complex that binds the viral origin of replication with high specificity. Then, a second dimer of E1 displaces the E2 dimer in an ATP-dependent manner to form the E1 tetramer. Following this, two E1 monomers are added to each half of the site, which results in the formation of two E1 trimers on the viral ori. Subsequently, two hexamers will be created. The double hexamer acts as a bi-directional helicase machinery and unwinds the viral DNA and then recruits the host DNA polymerase to start replication. This Human papillomavirus type 60 protein is Replication protein E1.